The sequence spans 74 residues: Exodeoxyribonuclease 7 small subunit (74 aa).

The protein belongs to the XseB family. As to quaternary structure, heterooligomer composed of large and small subunits.

The protein resides in the cytoplasm. It catalyses the reaction Exonucleolytic cleavage in either 5'- to 3'- or 3'- to 5'-direction to yield nucleoside 5'-phosphates.. Its function is as follows. Bidirectionally degrades single-stranded DNA into large acid-insoluble oligonucleotides, which are then degraded further into small acid-soluble oligonucleotides. The polypeptide is Exodeoxyribonuclease 7 small subunit (Ruthia magnifica subsp. Calyptogena magnifica).